Consider the following 405-residue polypeptide: Terminal uridylyltransferase cid1 (405 aa).

Position 90 (S90) interacts with UTP. Mg(2+) contacts are provided by D101 and D103. 8 residues coordinate UTP: A168, N171, T172, K193, K197, S211, Y212, and H336. The PAP-associated domain occupies 267 to 336 (SLGSLLHGFF…AIEDPFEISH (70 aa)). ATP is bound at residue R340. Positions 377–405 (APIPPRRQKKTDEQSNKKLLNETDGDNSE) are disordered. Basic and acidic residues predominate over residues 386 to 397 (KTDEQSNKKLLN).

Belongs to the DNA polymerase type-B-like family. Mg(2+) serves as cofactor. It depends on Mn(2+) as a cofactor.

The protein localises to the cytoplasm. It catalyses the reaction RNA(n) + UTP = RNA(n)-3'-uridine ribonucleotide + diphosphate. The enzyme catalyses RNA(n) + ATP = RNA(n)-3'-adenine ribonucleotide + diphosphate. Its function is as follows. Cytoplasmic uridylyltransferase that mediates the terminal uridylation of mRNAs with short poly(A) tails such as such as act1, hcn1 and urg1 mRNAs, hence facilitating global mRNA decay. Uridylates the 3' ends of actin mRNAs upon S-phase arrest. Also has a weak poly(A) polymerase (PAP) activity. Residue His-336 is responsible for the specificity for UTP. Involved in cell cycle arrest where in association with crb2/rhp9 and chk1 it inhibits unscheduled mitosis. This Schizosaccharomyces pombe (strain 972 / ATCC 24843) (Fission yeast) protein is Terminal uridylyltransferase cid1.